Reading from the N-terminus, the 292-residue chain is Protease HtpX homolog (292 aa).

Transmembrane regions (helical) follow at residues 4–24 and 38–58; these read IALF…VASL and LGAL…ISLL. His144 contacts Zn(2+). Glu145 is an active-site residue. Position 148 (His148) interacts with Zn(2+). Transmembrane regions (helical) follow at residues 152–172 and 199–219; these read GDMV…VFLS and ITTI…VAWF. Glu224 serves as a coordination point for Zn(2+).

This sequence belongs to the peptidase M48B family. It depends on Zn(2+) as a cofactor.

The protein resides in the cell inner membrane. This is Protease HtpX homolog from Acidovorax ebreus (strain TPSY) (Diaphorobacter sp. (strain TPSY)).